A 210-amino-acid chain; its full sequence is Phosphoheptose isomerase (210 aa).

The 165-residue stretch at 38 to 202 (IAACLARGGK…ENVAALAPYL (165 aa)) folds into the SIS domain. Substrate is bound at residue 53–55 (NGG). Residues histidine 62 and glutamate 66 each coordinate Zn(2+). Residues glutamate 66, 95 to 96 (ND), 121 to 123 (STS), serine 126, and glutamine 173 contribute to the substrate site. The Zn(2+) site is built by glutamine 173 and histidine 181.

This sequence belongs to the SIS family. GmhA subfamily. As to quaternary structure, homotetramer. Zn(2+) is required as a cofactor.

It is found in the cytoplasm. The enzyme catalyses 2 D-sedoheptulose 7-phosphate = D-glycero-alpha-D-manno-heptose 7-phosphate + D-glycero-beta-D-manno-heptose 7-phosphate. It participates in carbohydrate biosynthesis; D-glycero-D-manno-heptose 7-phosphate biosynthesis; D-glycero-alpha-D-manno-heptose 7-phosphate and D-glycero-beta-D-manno-heptose 7-phosphate from sedoheptulose 7-phosphate: step 1/1. Its function is as follows. Catalyzes the isomerization of sedoheptulose 7-phosphate in D-glycero-D-manno-heptose 7-phosphate. The polypeptide is Phosphoheptose isomerase (Desulfovibrio desulfuricans (strain ATCC 27774 / DSM 6949 / MB)).